Reading from the N-terminus, the 760-residue chain is Xaa-Pro dipeptidyl-peptidase (760 aa).

Active-site charge relay system residues include S349, D469, and H499.

The protein belongs to the peptidase S15 family. In terms of assembly, homodimer.

The protein localises to the cytoplasm. The catalysed reaction is Hydrolyzes Xaa-Pro-|- bonds to release unblocked, N-terminal dipeptides from substrates including Ala-Pro-|-p-nitroanilide and (sequentially) Tyr-Pro-|-Phe-Pro-|-Gly-Pro-|-Ile.. Removes N-terminal dipeptides sequentially from polypeptides having unsubstituted N-termini provided that the penultimate residue is proline. This chain is Xaa-Pro dipeptidyl-peptidase, found in Streptococcus pyogenes serotype M18 (strain MGAS8232).